The primary structure comprises 123 residues: Large ribosomal subunit protein bL12 (123 aa).

It belongs to the bacterial ribosomal protein bL12 family. Homodimer. Part of the ribosomal stalk of the 50S ribosomal subunit. Forms a multimeric L10(L12)X complex, where L10 forms an elongated spine to which 2 to 4 L12 dimers bind in a sequential fashion. Binds GTP-bound translation factors.

Forms part of the ribosomal stalk which helps the ribosome interact with GTP-bound translation factors. Is thus essential for accurate translation. The sequence is that of Large ribosomal subunit protein bL12 from Shewanella sp. (strain MR-4).